The following is a 952-amino-acid chain: Serine/threonine-protein kinase atg1 (952 aa).

A Protein kinase domain is found at Phe23 to Val329. ATP is bound by residues Ile29 to Val37 and Lys52. Asp166 serves as the catalytic Proton acceptor. Disordered stretches follow at residues Glu331 to Gln478, Gly510 to Ser573, Arg783 to Ser806, and Ala920 to Lys952. Basic and acidic residues-rich tracts occupy residues Gly338–Pro347 and Ser356–Thr372. Residues Ser386–Phe398 show a composition bias toward polar residues. Basic and acidic residues predominate over residues Pro429 to Glu439. Polar residues-rich tracts occupy residues Ala459 to Glu475, Pro553 to Ser573, and Asn793 to Ser806. Residues Ser933–Lys952 show a composition bias toward low complexity.

The protein belongs to the protein kinase superfamily. Ser/Thr protein kinase family. APG1/unc-51/ULK1 subfamily. Homodimer. Forms a ternary complex with ATG13 and ATG17.

The protein localises to the cytoplasm. It localises to the preautophagosomal structure membrane. The catalysed reaction is L-seryl-[protein] + ATP = O-phospho-L-seryl-[protein] + ADP + H(+). It catalyses the reaction L-threonyl-[protein] + ATP = O-phospho-L-threonyl-[protein] + ADP + H(+). Serine/threonine protein kinase involved in the cytoplasm to vacuole transport (Cvt) and found to be essential in autophagy, where it is required for the formation of autophagosomes. Involved in the clearance of protein aggregates which cannot be efficiently cleared by the proteasome. Required for selective autophagic degradation of the nucleus (nucleophagy) as well as for mitophagy which contributes to regulate mitochondrial quantity and quality by eliminating the mitochondria to a basal level to fulfill cellular energy requirements and preventing excess ROS production. Also involved in endoplasmic reticulum-specific autophagic process, in selective removal of ER-associated degradation (ERAD) substrates. Plays a key role in ATG9 and ATG23 cycling through the pre-autophagosomal structure and is necessary to promote ATG18 binding to ATG9 through phosphorylation of ATG9. Catalyzes phosphorylation of ATG4, decreasing the interaction between ATG4 and ATG8 and impairing deconjugation of PE-conjugated forms of ATG8. The protein is Serine/threonine-protein kinase atg1 of Botryotinia fuckeliana (strain B05.10) (Noble rot fungus).